The primary structure comprises 511 residues: Sporulation-specific chitinase 2 (511 aa).

A signal peptide spans 1-34 (MVGHSAQHRSKSSLVSHLLILLIFITIIIEMCLY). In terms of domain architecture, GH18 spans 73-472 (FISGVYYSNW…NAFNEGLHFN (400 aa)). An N-linked (GlcNAc...) asparagine glycan is attached at Asn147. The active-site Proton donor is the Glu223. N-linked (GlcNAc...) asparagine glycans are attached at residues Asn228, Asn456, and Asn472.

The protein belongs to the glycosyl hydrolase 18 family. Chitinase class III subfamily.

Its subcellular location is the secreted. It catalyses the reaction Random endo-hydrolysis of N-acetyl-beta-D-glucosaminide (1-&gt;4)-beta-linkages in chitin and chitodextrins.. This is Sporulation-specific chitinase 2 (CTS2) from Saccharomyces cerevisiae (strain ATCC 204508 / S288c) (Baker's yeast).